The following is a 348-amino-acid chain: Protein RecA (348 aa).

ATP is bound at residue 64 to 71 (GPESSGKT).

It belongs to the RecA family. Monomer; forms higher-order oligomers. Interacts with RecU. Interacts with DprA (smf). Interacts with RecD2.

Its subcellular location is the cytoplasm. The protein resides in the nucleoid. In terms of biological role, multifunctional protein involved in homologous recombination, DNA repair and competence. Can catalyze the hydrolysis of (d)ATP in the presence of single-stranded (ss)DNA; prefers dATP at least in vitro, catalyzes the dATP-dependent uptake of ssDNA by duplex DNA, and the dATP-dependent hybridization of homologous ssDNA (strand exchange). RecA-ATP cannot catalyze homologous DNA strand exchange; SsbA and DprA activate strand exchange by RecA-ATP. It interacts with LexA causing its activation and leading to its autocatalytic cleavage. Hydrolysis of ATP in the presence of ssDNA is partially inhibited by RecU. Required for DNA transformation; protects transforming DNA from degradation, possibly in combination with DprA. Blocks replication of both leading and lagging strand DNA in the presence of RecO and SsbA; RecD2 is able to overcome this blockage. Functionally, recruited to repair centers (RCs), foci that are the site of double-stranded DNA break(s), after RecN. Concomitant with the appearance of RecO at the RCs, RecA forms threads that extend from RCs toward the opposite cell half, possibly searching for sequence homology along the sister chromosome. The threads disappear after about 2 hours. Thread formation is absolutely dependent on RecJ or AadAB. Thread formation is also dependent on RarA. The polypeptide is Protein RecA (Bacillus subtilis (strain 168)).